The following is a 570-amino-acid chain: Cytoplasmic polyadenylation element-binding protein 2 (570 aa).

Residues leucine 434–phenylalanine 516 enclose the RRM domain.

As to expression, expressed specifically in the spermatogenic germ line.

Cytoplasmic polyadenylation element binding protein that binds to and regulates the translation of specific mRNAs. Not required for oogenesis. This is Cytoplasmic polyadenylation element-binding protein 2 (cpb-2) from Caenorhabditis elegans.